The primary structure comprises 652 residues: Probable serine/threonine-protein kinase mkcD (652 aa).

3 disordered regions span residues 1–47, 163–198, and 257–289; these read MNNI…RKNK, NPID…LTNV, and QQKL…TLSP. Over residues 182–191 the composition is skewed to gly residues; it reads NGGGSGGGGD. Positions 231–275 form a coiled coil; sequence KNNQNLHHKQQQLQQLQQLKQQHLQQQQKLKQEQQQEQQQQQEDE. Residues 257–271 show a composition bias toward low complexity; the sequence is QQKLKQEQQQEQQQQ. Residues 279-289 show a composition bias toward polar residues; it reads SPVSTSSTLSP. One can recognise a Protein kinase domain in the interval 369–626; sequence FKNLDFEARG…SSQLLQHPFL (258 aa). ATP is bound by residues 375–383 and K403; that span reads EARGGFGSV. D494 acts as the Proton acceptor in catalysis.

Belongs to the protein kinase superfamily. STE Ser/Thr protein kinase family. STE20 subfamily. Mg(2+) serves as cofactor.

The enzyme catalyses L-seryl-[protein] + ATP = O-phospho-L-seryl-[protein] + ADP + H(+). It carries out the reaction L-threonyl-[protein] + ATP = O-phospho-L-threonyl-[protein] + ADP + H(+). The chain is Probable serine/threonine-protein kinase mkcD from Dictyostelium discoideum (Social amoeba).